Reading from the N-terminus, the 351-residue chain is Phosphate acyltransferase (351 aa).

It belongs to the PlsX family. Homodimer. Probably interacts with PlsY.

It is found in the cytoplasm. It carries out the reaction a fatty acyl-[ACP] + phosphate = an acyl phosphate + holo-[ACP]. Its pathway is lipid metabolism; phospholipid metabolism. Catalyzes the reversible formation of acyl-phosphate (acyl-PO(4)) from acyl-[acyl-carrier-protein] (acyl-ACP). This enzyme utilizes acyl-ACP as fatty acyl donor, but not acyl-CoA. In Paramagnetospirillum magneticum (strain ATCC 700264 / AMB-1) (Magnetospirillum magneticum), this protein is Phosphate acyltransferase.